Reading from the N-terminus, the 258-residue chain is Chaperone protein FaeE (258 aa).

A signal peptide spans 1–34 (MSKRNAVTTFFTNRVTKALGMTLALMMTCQSAMA). Residues 239–258 (KKPAAPEAAKAEKADTAEQK) form a disordered region. Over residues 247–258 (AKAEKADTAEQK) the composition is skewed to basic and acidic residues.

The protein belongs to the periplasmic pilus chaperone family.

It localises to the periplasm. Functionally, mediates assembly of pili by forming soluble multimeric complexes with pili subunits as an intermediate step in the assembly process. This protein is involved in K88 pili assembly. Protects pilin protein from proteolytic degradation by DegP and from premature polymerization. This chain is Chaperone protein FaeE (faeE), found in Escherichia coli.